Reading from the N-terminus, the 870-residue chain is UvrABC system protein B (870 aa).

In terms of domain architecture, Helicase ATP-binding spans 20 to 410 (EGVDNNDRTQ…VFAEQVIRPT (391 aa)). 33 to 40 (GVTGSGKT) is a binding site for ATP. The Beta-hairpin motif lies at 86-109 (YYDYYQPEAYVPRTDTFIEKESSI). One can recognise a Helicase C-terminal domain in the interval 425–591 (QVDDVVGEIR…SVKSRISDIL (167 aa)). Residues 620–655 (KAHLDAMEKQMRDAAANLDFEKAARIRDEIKRLREM) form the UVR domain. 2 disordered regions span residues 671-698 (ESPV…QERF) and 741-870 (AKPS…RPGK). The segment covering 679–689 (KGKHNKGVAKH) has biased composition (basic residues). Basic and acidic residues-rich tracts occupy residues 793–808 (NSLD…KPVE) and 827–836 (TDVKDRDDSA). Residues 858 to 870 (EKRRPGKTGRPGK) are compositionally biased toward basic residues.

Belongs to the UvrB family. As to quaternary structure, forms a heterotetramer with UvrA during the search for lesions. Interacts with UvrC in an incision complex.

It is found in the cytoplasm. Its function is as follows. The UvrABC repair system catalyzes the recognition and processing of DNA lesions. A damage recognition complex composed of 2 UvrA and 2 UvrB subunits scans DNA for abnormalities. Upon binding of the UvrA(2)B(2) complex to a putative damaged site, the DNA wraps around one UvrB monomer. DNA wrap is dependent on ATP binding by UvrB and probably causes local melting of the DNA helix, facilitating insertion of UvrB beta-hairpin between the DNA strands. Then UvrB probes one DNA strand for the presence of a lesion. If a lesion is found the UvrA subunits dissociate and the UvrB-DNA preincision complex is formed. This complex is subsequently bound by UvrC and the second UvrB is released. If no lesion is found, the DNA wraps around the other UvrB subunit that will check the other stand for damage. The polypeptide is UvrABC system protein B (Mesorhizobium japonicum (strain LMG 29417 / CECT 9101 / MAFF 303099) (Mesorhizobium loti (strain MAFF 303099))).